Consider the following 448-residue polypeptide: Solute carrier family 52, riboflavin transporter, member 1 (448 aa).

The next 5 helical transmembrane spans lie at 14 to 34 (LLVA…WVEL), 47 to 67 (LPSY…VVTL), 79 to 99 (VPIQ…APLW), 124 to 144 (ACCT…PPFL), and 147 to 167 (FFLG…VQGV). The N-linked (GlcNAc...) asparagine glycan is linked to Asn178. Residues 191–211 (FPASTFFWALTALLVTSAAAF) form a helical membrane-spanning segment. A disordered region spans residues 225–267 (TTGGSGPELQLGSPGAEEEEKEEEEALPLQEPPSQAAGTIPGP). Residues 240–250 (AEEEEKEEEEA) are compositionally biased toward acidic residues. A run of 5 helical transmembrane segments spans residues 280–300 (AFLL…LPSV), 315–335 (LAVV…MGVL), 342–362 (LVGL…LAIL), 369–389 (VGTT…LCVF), and 407–427 (ALLA…GAMF).

The protein belongs to the riboflavin transporter family. In terms of tissue distribution, widely expressed. Highly expressed in the testis, placenta and small intestine. Expressed at lower level in other tissues.

It localises to the cell membrane. The enzyme catalyses riboflavin(in) = riboflavin(out). With respect to regulation, the activity is strongly inhibited by riboflavin analogs, such as lumiflavin. Weakly inhibited by flavin adenine dinucleotide (FAD). Plasma membrane transporter mediating the uptake by cells of the water soluble vitamin B2/riboflavin that plays a key role in biochemical oxidation-reduction reactions of the carbohydrate, lipid, and amino acid metabolism. Humans are unable to synthesize vitamin B2/riboflavin and must obtain it via intestinal absorption. Its function is as follows. (Microbial infection) May function as a cell receptor to retroviral envelopes similar to the porcine endogenous retrovirus (PERV-A). The chain is Solute carrier family 52, riboflavin transporter, member 1 from Homo sapiens (Human).